A 479-amino-acid chain; its full sequence is Lactaldehyde dehydrogenase (479 aa).

Residue Leu-150 coordinates NAD(+). Arg-161 contributes to the (S)-lactate binding site. NAD(+)-binding positions include 176–179 (KPSE), Gln-214, and Ser-230. A (S)-lactate-binding site is contributed by Glu-251. Catalysis depends on residues Glu-251 and Cys-285. Asn-286 is a binding site for (S)-lactate. Arg-336 contacts NAD(+). (S)-lactate-binding residues include Glu-443 and His-449.

This sequence belongs to the aldehyde dehydrogenase family. As to quaternary structure, homotetramer.

The catalysed reaction is (S)-lactaldehyde + NAD(+) + H2O = (S)-lactate + NADH + 2 H(+). The enzyme catalyses glycolaldehyde + NAD(+) + H2O = glycolate + NADH + 2 H(+). It functions in the pathway carbohydrate degradation; L-fucose degradation. It participates in carbohydrate degradation; L-rhamnose degradation. With respect to regulation, substrate inhibition is very strong with lactaldehyde, diminishing progressively with glycolaldehyde, glyceraldehyde or methylglyoxal. Inhibited by p-hydroxy mercuribenzoate and by some cations, including Mn(2+), Ca(2+), Cu(2+) and Zn(2+). Inhibited by NADH. Catalyzes the irreversible oxidation of L-lactaldehyde to L-lactate. Also shows high activity with glycolaldehyde and L-glyceraldehyde. Has weaker activity with various aldehydes such as methylglyoxal, propionaldehyde or benzaldehyde. Involved in the degradation of lactaldehyde produced during metabolism of L-fucose and L-rhamnose. It may be involved in several other metabolic pathways. This is Lactaldehyde dehydrogenase (aldA) from Escherichia coli (strain K12).